A 746-amino-acid chain; its full sequence is F-box only protein 30 (746 aa).

Residues 49–110 (EHRLLCPFER…SYSDRKSYES (62 aa)) form a TRAF-type zinc finger. Disordered regions lie at residues 222–241 (MDEE…DQDH) and 247–266 (IGAV…QAEQ). Positions 225–241 (ENNKESFQDKNLKDQDH) are enriched in basic and acidic residues. Polar residues predominate over residues 256-266 (SGTSQNAQAEQ). S383 carries the post-translational modification Phosphoserine. The F-box domain maps to 611-659 (SDHLSSLPFEVLQHIAGFLDGFSLCQLACVSRLMRDVCGSLLQSRGMVI).

Part of a SCF (SKP1-cullin-F-box) protein ligase complex. Interacts with SKP1, CUL1 and RBX1/ROC1. Auto-ubiquitinated. Post-translationally, may be neddylated. Neddylation may be required for E3 ligase activity, since it was observed only after purification with o-phenanthroline.

Its pathway is protein modification; protein ubiquitination. Substrate-recognition component of the SCF (SKP1-CUL1-F-box protein)-type E3 ubiquitin ligase complex. Required for muscle atrophy following denervation. This Mus musculus (Mouse) protein is F-box only protein 30 (Fbxo30).